Reading from the N-terminus, the 955-residue chain is Aminopeptidase A (955 aa).

Residues 1–17 are Cytoplasmic-facing; that stretch reads MDIEDKSSKMHCMKGKH. The chain crosses the membrane as a helical; Signal-anchor for type II membrane protein span at residues 18–38; the sequence is VAIICGVVIAVGLILGLGLGL. Topologically, residues 39-955 are extracellular; the sequence is GLKPEACNPP…LENSEQPNFV (917 aa). A disordered region spans residues 49-69; the sequence is EDNGLLSTKPPTTSTPNVTNP. The segment covering 55 to 69 has biased composition (low complexity); that stretch reads STKPPTTSTPNVTNP. N-linked (GlcNAc...) asparagine glycosylation is found at N65, N118, and N192. E218 serves as a coordination point for substrate. 3 N-linked (GlcNAc...) asparagine glycosylation sites follow: N312, N319, and N335. Residue 352 to 356 participates in substrate binding; it reads GAMEN. H388 is a binding site for Zn(2+). E389 functions as the Proton acceptor in the catalytic mechanism. Residues H392 and E411 each coordinate Zn(2+). N-linked (GlcNAc...) asparagine glycans are attached at residues N458, N547, N584, N592, N647, N674, N681, N759, N766, N823, and N836. Residue R882 participates in substrate binding.

It belongs to the peptidase M1 family. In terms of assembly, homodimer; disulfide-linked. It depends on Zn(2+) as a cofactor.

The protein localises to the cell membrane. The catalysed reaction is Release of N-terminal glutamate (and to a lesser extent aspartate) from a peptide.. With respect to regulation, the partially purified protein is inhibited by the aminopeptidase competitive inhibitors amastatin (Leu and acidic inhibitor), and bestatin (Leu inhibitor), by chelating agents EDTA, and 1,10-Phenanthroline, as well as by Zn(2+) ions. Substrate specificity is modulated by Ca(2+), Ba(2+), and Mn(2+) ions which enhances the enzymatic activity for cleavage of acidic residues. Its function is as follows. Venom protein that cleaves N-terminal acidic residues from peptides with high potency in presence of calcium. It may have several roles in venom including alteration of blood pressure by cleaving circulating angiotensin-2, general degradation of host tissue, increase of permeability to other venom components, and/or processing of other toxins in the venom. This chain is Aminopeptidase A, found in Gloydius brevicauda (Korean slamosa snake).